The chain runs to 519 residues: UvrABC system protein C (519 aa).

Residues 9–87 (HLPGCYLFKN…IKKHWPRYNI (79 aa)) form the GIY-YIG domain. A UVR domain is found at 191-226 (RELIESMEKDMRELASRQQFEQAMALRDEIAALEYL).

It belongs to the UvrC family. In terms of assembly, interacts with UvrB in an incision complex.

Its subcellular location is the cytoplasm. Its function is as follows. The UvrABC repair system catalyzes the recognition and processing of DNA lesions. UvrC both incises the 5' and 3' sides of the lesion. The N-terminal half is responsible for the 3' incision and the C-terminal half is responsible for the 5' incision. The protein is UvrABC system protein C of Methanosarcina barkeri (strain Fusaro / DSM 804).